The following is a 448-amino-acid chain: Phosphoglucosamine mutase (448 aa).

Serine 100 functions as the Phosphoserine intermediate in the catalytic mechanism. Serine 100, aspartate 240, aspartate 242, and aspartate 244 together coordinate Mg(2+). Serine 100 is modified (phosphoserine).

It belongs to the phosphohexose mutase family. Requires Mg(2+) as cofactor. In terms of processing, activated by phosphorylation.

The catalysed reaction is alpha-D-glucosamine 1-phosphate = D-glucosamine 6-phosphate. Catalyzes the conversion of glucosamine-6-phosphate to glucosamine-1-phosphate. The protein is Phosphoglucosamine mutase of Bacillus cereus (strain ATCC 10987 / NRS 248).